Reading from the N-terminus, the 1209-residue chain is MKIWRFLLMKKQTRLPFDNLPFYNKVMDKTAIKKLISRLIDHFGMTYTSHILDQLKTSGFKQATDTAISLGIDDLLTAPSKGWLVQDAEQQGSVSEKQNHYGNLHAVEKLRQSIEIWYATSEYLRKEMNTNFSMTDPLNPVHVMSFSGARGNTSQVHQLVGMRGLMSDPQGQIIDLPIRRNLREGLSLTEYIISCYGARKGVVDTAVRTADAGYLTRRLVEVVQQIVVRRTDCGTVQGIFVSPIRGRERDINEVVVRTQILIGRVLADDVYINRRCIATRNQDIGVGLANQLRNIRPRPIYIRTPFTCKSISRICQLCYGRSTTHSHLIELGEAVGIIAGQSIGEPGTQLTLRTFHTGGVFTGDIAEHIRAPFNGKIEFNENLVYPTRTRNGHPAYLCHNNLSITIDGQNQVQNLTIPPQSLLLVQNDQYVESEQIIAEVRARTSSFKEKVRKNIYSDLEGEMHWSTNVCHAPEYVHGNVHSILRTGYLWILSGGIYGSGVVPFPFHKYQDQVDVQPFVAKHTDSYVDQVEHRSGDSNCYGKEEQIFSYSETETDRTISNEHRDSIYVTFSPKNYNMKGKKQMNRFIVSLQCDKEWGKRIIPCPDAILRIPKSGILQINSIFGYSNVEHGIPDGPNMTTPFSLDLSREGDNLQIQISNSILYEDGERIQVMSDTSIPLVRTCLGFDWEQIDSIESEAYVSLISVRTNKIVNNMVQISLMKYPPFFMGRRDNKASSNLMFHNNLDHTNLFSSNGASQLISKHQGTICSLSNGEEDSGSFMVLSPSDCFRIVLFNDSKCYDTGNKSNRKDPMRKIIEFSGLLGHLHSITSRFPSSQFITDKKVLSKKHSIFHNYFMDENMRISHFDPCRNIISNLLGPNWCSSSSEFCKKTFPVVSLGQLIPESVWISEDEPLPESGQIIAVDEESLVIRSAKPYLATRKATVHGHYGEILDKGDTLITLIYERLKSSDIIQGLPKVEQLSEARLNNSISMNLKESFENWTGDMTRFLGSLWGLFISARITMEQSQIHLVNQIQKVYRSQGVRIGDKHIEIIVRQMTSKVLISEDGTANVFSPGELIGLSRAQRMDRALEETIYYQTMLLGITRASLNTQSFISEASFQETARVLAKAALQGRIDWLKGLKENVILGGMIPAGTGQHIHRSGKRNGIDPRIGNRNLFSNKVKDILFHHDKVSFFSIQENYHNILKQPLKES.

The Zn(2+) site is built by C233, C308, C315, and C318.

The protein belongs to the RNA polymerase beta' chain family. RpoC2 subfamily. In terms of assembly, in plastids the minimal PEP RNA polymerase catalytic core is composed of four subunits: alpha, beta, beta', and beta''. When a (nuclear-encoded) sigma factor is associated with the core the holoenzyme is formed, which can initiate transcription. The cofactor is Zn(2+).

The protein resides in the plastid. The protein localises to the chloroplast. It catalyses the reaction RNA(n) + a ribonucleoside 5'-triphosphate = RNA(n+1) + diphosphate. Functionally, DNA-dependent RNA polymerase catalyzes the transcription of DNA into RNA using the four ribonucleoside triphosphates as substrates. The protein is DNA-directed RNA polymerase subunit beta'' of Pinus koraiensis (Korean pine).